A 684-amino-acid chain; its full sequence is Fermitin family homolog 2 (684 aa).

Residues 40–81 (HIGGVMLKLVEKLDVKKDWSDHALWWEKKKTWLLKTHWTLDK) are interaction with membranes containing phosphatidylinositol phosphate. Residues 141–163 (LRKPRDPKKKKKKLEDAEEETLE) are disordered. Residues 279–577 (DLNPKYDAIR…SLPEFGITHF (299 aa)) enclose the FERM domain. Residues 378–474 (KVFKPKKLTL…WMAACRLASK (97 aa)) form the PH domain. Lys-381 contributes to the a 1,2-diacyl-sn-glycero-3-phospho-(1D-myo-inositol-3,4,5-trisphosphate) binding site.

The protein belongs to the kindlin family.

It localises to the cytoplasm. The protein resides in the cell cortex. Its subcellular location is the cytoskeleton. The protein localises to the stress fiber. It is found in the cell junction. It localises to the focal adhesion. The protein resides in the membrane. Its subcellular location is the cell projection. The protein localises to the lamellipodium membrane. It is found in the nucleus. It localises to the myofibril. The protein resides in the sarcomere. Its subcellular location is the i band. The protein localises to the cell surface. Its function is as follows. Scaffolding protein that enhances integrin activation mediated by TLN1 and/or TLN2, but activates integrins only weakly by itself. Binds to membranes enriched in phosphoinositides. Enhances integrin-mediated cell adhesion onto the extracellular matrix and cell spreading; this requires both its ability to interact with integrins and with phospholipid membranes. Required for the assembly of focal adhesions. Participates in the connection between extracellular matrix adhesion sites and the actin cytoskeleton and also in the orchestration of actin assembly and cell shape modulation. Plays a role in the TGFB1 and integrin signaling pathways. Stabilizes active CTNNB1 and plays a role in the regulation of transcription mediated by CTNNB1 and TCF7L2/TCF4 and in Wnt signaling. Required for normal embryonic development, including normal heart morphogenesis and normal angiogenesis. This is Fermitin family homolog 2 (fermt2) from Danio rerio (Zebrafish).